Reading from the N-terminus, the 645-residue chain is Acetyl-coenzyme A synthetase (645 aa).

CoA contacts are provided by residues 190 to 193 (RGGK) and Thr-308. Residues 384–386 (GEP), 408–413 (DTWWQT), Asp-497, and Arg-512 contribute to the ATP site. Ser-520 is a CoA binding site. Arg-523 provides a ligand contact to ATP. Positions 534, 536, and 539 each coordinate Mg(2+). N6-acetyllysine is present on Lys-606.

The protein belongs to the ATP-dependent AMP-binding enzyme family. It depends on Mg(2+) as a cofactor. Post-translationally, acetylated. Deacetylation by the SIR2-homolog deacetylase activates the enzyme.

It catalyses the reaction acetate + ATP + CoA = acetyl-CoA + AMP + diphosphate. In terms of biological role, catalyzes the conversion of acetate into acetyl-CoA (AcCoA), an essential intermediate at the junction of anabolic and catabolic pathways. AcsA undergoes a two-step reaction. In the first half reaction, AcsA combines acetate with ATP to form acetyl-adenylate (AcAMP) intermediate. In the second half reaction, it can then transfer the acetyl group from AcAMP to the sulfhydryl group of CoA, forming the product AcCoA. The protein is Acetyl-coenzyme A synthetase of Alcanivorax borkumensis (strain ATCC 700651 / DSM 11573 / NCIMB 13689 / SK2).